A 302-amino-acid chain; its full sequence is N(G),N(G)-dimethylarginine dimethylaminohydrolase (302 aa).

Substrate-binding residues include aspartate 102, arginine 127, and arginine 172. Histidine 201 acts as the Proton donor in catalysis. Cysteine 295 acts as the Nucleophile in catalysis.

Belongs to the DDAH family.

It carries out the reaction N(omega),N(omega)-dimethyl-L-arginine + H2O = dimethylamine + L-citrulline. The catalysed reaction is N(omega)-methyl-L-arginine + H2O = L-citrulline + methylamine. Its function is as follows. Hydrolyzes N(G),N(G)-dimethyl-L-arginine (ADMA) and N(G)-monomethyl-L-arginine (MMA). The sequence is that of N(G),N(G)-dimethylarginine dimethylaminohydrolase from Mycobacterium tuberculosis (strain ATCC 25618 / H37Rv).